The sequence spans 185 residues: Ribosome-recycling factor (185 aa).

This sequence belongs to the RRF family.

The protein resides in the cytoplasm. Responsible for the release of ribosomes from messenger RNA at the termination of protein biosynthesis. May increase the efficiency of translation by recycling ribosomes from one round of translation to another. This Heliobacterium modesticaldum (strain ATCC 51547 / Ice1) protein is Ribosome-recycling factor.